Reading from the N-terminus, the 63-residue chain is Large ribosomal subunit protein bL28c (63 aa).

Belongs to the bacterial ribosomal protein bL28 family.

It is found in the plastid. It localises to the chloroplast. The protein is Large ribosomal subunit protein bL28c (rpl28) of Porphyra purpurea (Red seaweed).